A 367-amino-acid polypeptide reads, in one-letter code: Aminomethyltransferase (367 aa).

Belongs to the GcvT family. The glycine cleavage system is composed of four proteins: P, T, L and H.

It carries out the reaction N(6)-[(R)-S(8)-aminomethyldihydrolipoyl]-L-lysyl-[protein] + (6S)-5,6,7,8-tetrahydrofolate = N(6)-[(R)-dihydrolipoyl]-L-lysyl-[protein] + (6R)-5,10-methylene-5,6,7,8-tetrahydrofolate + NH4(+). In terms of biological role, the glycine cleavage system catalyzes the degradation of glycine. The polypeptide is Aminomethyltransferase (Lysinibacillus sphaericus (strain C3-41)).